The chain runs to 857 residues: MSEAMVFSKIDEYTLFMSRSLQKSLKTFAEQVMALIYQYKDTLVEDRLALTNTLDEAVQILVDSGKEEADKLGFNIYSAVSRYISEIWASQSGQTTAAPPATDIDGLHRQLVALKNSLGQNAELYEQRCQLQAELRELQEFSENPAAAVEEIMQLKAQIDELKYGASNHNALVQEKRDLERHLADLRLSRQDTNSRLPQEIDRLRAEIEDEKRNLPHMDDLQRQRDELQRQLDTIRRRGNTSGVMAEIENIQRQIDDANSSASSEHELRMLRAEVETLRAQKSIVTRLEAENADLRRELQDIRGRAQEMSASQRYSANQAQELQEKAMQAEELLQQKIELRRQLHEALERADAGEAALRDKRRLEDEIKGLQLRLTENDFTKERSILRNEIQAKTTEIDTLISDRRALETKLLNKEAEVDQLLYEKQLLKTELNSYRGTNEDIDKLTFEKRQLVEELNDLREKTIKYDQLAREKAALETELKENSYNFDQLLEQKQQMRSDLNALREKAADYERVDRELRLKDKELEEKNAEIERLLEDRRVMRTELLHSKESATDVDSLIQEKRLRDRELAHLRDRMSEYERVVEERIQKEKENNLLKQRITELEQQQRTATVRETEMSALREKANELDGYNRERQAREHEINMLRDKALESDKLRQDNRVMAMELTELREKVQLLEKLQYEKRARDVEMLELRHKAMDVDTLVEEKQRLEMRLAELKIKVNNYDQLADDKARLQEQLKEMSDKLIEFEMIMDDNRRLKLQVKELDLKTANMEKLYEEYKKLEDQLKATKAMTSTGMGVSAASPAFYKTKSMRLTQQNNQMKNTTDNLLTRDIPKLIDKLIERPAGTTTMGRSGKF.

2 coiled-coil regions span residues histidine 169–glutamate 546 and leucine 571–methionine 793.

The protein localises to the cytoplasm. Its subcellular location is the cytoskeleton. Functionally, structural component of the ventral disk involved in maintanance of a domed conformation of the disk required for proper attachment. May have a role in immobilizing the microtubules between cell divisions. The protein is Median body protein of Giardia intestinalis (strain ATCC 50803 / WB clone C6) (Giardia lamblia).